The primary structure comprises 892 residues: LEAF RUST 10 DISEASE-RESISTANCE LOCUS RECEPTOR-LIKE PROTEIN KINASE-like 2.8 (892 aa).

Positions 1–27 are cleaved as a signal peptide; sequence MYYHSLSSYSILFFLFSLFHHLPCASS. Residues 28 to 496 lie on the Extracellular side of the membrane; sequence NQGLGWCESL…RFIATLVRYT (469 aa). N-linked (GlcNAc...) asparagine glycans are attached at residues N42, N71, N88, N112, N186, N222, N230, N286, N358, N384, N407, and N458. Residues 497–517 traverse the membrane as a helical segment; that stretch reads FIALGALTGVVIVFLVLLCPC. Residues 518-892 lie on the Cytoplasmic side of the membrane; sequence FRVQIFRKRK…TNSKLESSSL (375 aa). T547 carries the post-translational modification Phosphothreonine. The Protein kinase domain maps to 556–854; sequence KSFTEVVGRG…ALEVPPRPVL (299 aa). ATP is bound by residues 562-570 and K584; that span reads VGRGGFGIV. Y629 carries the phosphotyrosine modification. Catalysis depends on D680, which acts as the Proton acceptor. 2 positions are modified to phosphothreonine: T717 and T720.

It belongs to the protein kinase superfamily. Ser/Thr protein kinase family.

The protein resides in the membrane. The catalysed reaction is L-seryl-[protein] + ATP = O-phospho-L-seryl-[protein] + ADP + H(+). It carries out the reaction L-threonyl-[protein] + ATP = O-phospho-L-threonyl-[protein] + ADP + H(+). This chain is LEAF RUST 10 DISEASE-RESISTANCE LOCUS RECEPTOR-LIKE PROTEIN KINASE-like 2.8, found in Arabidopsis thaliana (Mouse-ear cress).